The sequence spans 890 residues: Protein FAM171A1 (890 aa).

The signal sequence occupies residues 1-21 (MSRSAALLLCLLGCHVWKAVT). Residues 22–303 (KTLREPGAGA…VTQDITTYHT (282 aa)) lie on the Extracellular side of the membrane. N190 and N194 each carry an N-linked (GlcNAc...) asparagine glycan. A helical transmembrane segment spans residues 304 to 324 (VFLLAILGGMAFILLVLLCLL). Over 325-890 (LYYCRRKCMK…ERPLMAFNIK (566 aa)) the chain is Cytoplasmic. Residues S358, S360, S371, S422, S443, and S525 each carry the phosphoserine modification. Disordered regions lie at residues 730-759 (AGRN…RGDA) and 818-890 (EGSS…FNIK). A compositionally biased stretch (basic and acidic residues) spans 747-757 (NEPKSARKGRG). Polar residues predominate over residues 822–833 (RRSGGQLPSLQE). Phosphoserine is present on residues S849 and S855. The span at 858–869 (EEEEDDDDDDQG) shows a compositional bias: acidic residues. Residues 870 to 883 (EDKKSPWQKREERP) are compositionally biased toward basic and acidic residues.

This sequence belongs to the FAM171 family. In terms of assembly, interacts with ADAM10, NSG1 and OAZ1.

It is found in the cell membrane. Functionally, involved in the regulation of the cytoskeletal dynamics, plays a role in actin stress fiber formation. This Pongo abelii (Sumatran orangutan) protein is Protein FAM171A1 (FAM171A1).